The primary structure comprises 701 residues: MTTSESPDAYTESFGAHTIVKPAGPPRVGQPSWNPQRASSMPVNRYRPFAEEVEPIRLRNRTWPDRVIDRAPLWCAVDLRDGNQALIDPMSPARKRRMFDLLVRMGYKEIEVGFPSASQTDFDFVREIIEQGAIPDDVTIQVLTQCRPELIERTFQACSGAHRAIVHFYNSTSILQRRVVFRANRAEVQAIATDGARKCVEQAAKYPGTQWRFEYSPESYTGTELEYAKQVCDAVGEVIAPTPERPIIFNLPATVEMTTPNVYADSIEWMSRNLANRESVILSLHPHNDRGTAVAAAELGFAAGADRIEGCLFGNGERTGNVCLVTLGLNLFSRGVDPQIDFSNIDEIRRTVEYCNQLPVHERHPYGGDLVYTAFSGSHQDAINKGLDAMKLDADAADCDVDDMLWQVPYLPIDPRDVGRTYEAVIRVNSQSGKGGVAYIMKTDHGLSLPRRLQIEFSQVIQKIAEGTAGEGGEVSPKEMWDAFAEEYLAPVRPLERIRQHVDAADDDGGTTSITATVKINGVETEISGSGNGPLAAFVHALADVGFDVAVLDYYEHAMSAGDDAQAAAYVEASVTIASPAQPGEAGRHASDPVTIASPAQPGEAGRHASDPVTIASPAQPGEAGRHASDPVTIASPAQPGEAGRHASDPVTIASPAQPGEAGRHASDPVTSKTVWGVGIAPSITTASLRAVVSAVNRAAR.

The tract at residues Met1–Ser40 is disordered. The span at Pro31–Ser40 shows a compositional bias: polar residues. One can recognise a Pyruvate carboxyltransferase domain in the interval Pro72–Asp346. Asp81, His285, His287, and Asn321 together coordinate Mg(2+). The regulatory domain stretch occupies residues Pro491–Arg701. The VNTR1 repeat unit spans residues Val575–Pro593. The segment at Ala581 to Val670 is disordered. The VNTR2 repeat unit spans residues Val594–Pro612. The VNTR3 repeat unit spans residues Val613 to Pro631. One copy of the VNTR4 repeat lies at Val632 to Pro650. One copy of the VNTR5 repeat lies at Val651–Pro669.

It belongs to the alpha-IPM synthase/homocitrate synthase family. LeuA type 2 subfamily. In terms of assembly, homodimer. The cofactor is Mg(2+).

It is found in the cytoplasm. The catalysed reaction is 3-methyl-2-oxobutanoate + acetyl-CoA + H2O = (2S)-2-isopropylmalate + CoA + H(+). Its pathway is amino-acid biosynthesis; L-leucine biosynthesis; L-leucine from 3-methyl-2-oxobutanoate: step 1/4. In terms of biological role, catalyzes the condensation of the acetyl group of acetyl-CoA with 3-methyl-2-oxobutanoate (2-ketoisovalerate) to form 3-carboxy-3-hydroxy-4-methylpentanoate (2-isopropylmalate). The sequence is that of 2-isopropylmalate synthase from Mycobacterium bovis (strain ATCC BAA-935 / AF2122/97).